The sequence spans 535 residues: Peptide chain release factor 3 (535 aa).

Residues 8-277 (KRRRTFAIIS…TLVELAPPPG (270 aa)) form the tr-type G domain. GTP-binding positions include 17–24 (SHPDAGKT), 85–89 (DTPGH), and 139–142 (NKLD).

The protein belongs to the TRAFAC class translation factor GTPase superfamily. Classic translation factor GTPase family. PrfC subfamily.

Its subcellular location is the cytoplasm. Increases the formation of ribosomal termination complexes and stimulates activities of RF-1 and RF-2. It binds guanine nucleotides and has strong preference for UGA stop codons. It may interact directly with the ribosome. The stimulation of RF-1 and RF-2 is significantly reduced by GTP and GDP, but not by GMP. The sequence is that of Peptide chain release factor 3 from Nitrosomonas europaea (strain ATCC 19718 / CIP 103999 / KCTC 2705 / NBRC 14298).